A 122-amino-acid chain; its full sequence is Large ribosomal subunit protein bL12 (122 aa).

This sequence belongs to the bacterial ribosomal protein bL12 family. Homodimer. Part of the ribosomal stalk of the 50S ribosomal subunit. Forms a multimeric L10(L12)X complex, where L10 forms an elongated spine to which 2 to 4 L12 dimers bind in a sequential fashion. Binds GTP-bound translation factors.

Functionally, forms part of the ribosomal stalk which helps the ribosome interact with GTP-bound translation factors. Is thus essential for accurate translation. The protein is Large ribosomal subunit protein bL12 of Cellvibrio japonicus (strain Ueda107) (Pseudomonas fluorescens subsp. cellulosa).